An 89-amino-acid chain; its full sequence is Small ribosomal subunit protein uS14 (89 aa).

Belongs to the universal ribosomal protein uS14 family. As to quaternary structure, part of the 30S ribosomal subunit. Contacts proteins S3 and S10.

Functionally, binds 16S rRNA, required for the assembly of 30S particles and may also be responsible for determining the conformation of the 16S rRNA at the A site. The polypeptide is Small ribosomal subunit protein uS14 (Leuconostoc mesenteroides subsp. mesenteroides (strain ATCC 8293 / DSM 20343 / BCRC 11652 / CCM 1803 / JCM 6124 / NCDO 523 / NBRC 100496 / NCIMB 8023 / NCTC 12954 / NRRL B-1118 / 37Y)).